Reading from the N-terminus, the 666-residue chain is Sodium/potassium/calcium exchanger 2 (666 aa).

Topologically, residues 1–38 (MDLHQSPTARLLQKWCSHESPFGCRRHYNSRKKLKLIR) are cytoplasmic. The chain crosses the membrane as a helical span at residues 39–59 (VIGLVMGLVAVSTVPFSISAF). Topologically, residues 60–133 (TETDSQSNRG…DIFSLEERRK (74 aa)) are extracellular. Residues 63-122 (DSQSNRGEASDMSGPRVAQGHRQRTLLDLNDKIRDYTPQPPASQEDQAENSTEHTQGDYP) are disordered. Asn112 carries N-linked (GlcNAc...) asparagine glycosylation. Over residues 113-122 (STEHTQGDYP) the composition is skewed to basic and acidic residues. Residues 134–154 (GAIILHVIGMIYMFIALAIVC) form a helical membrane-spanning segment. Residues 155–179 (DEFFVPSLTVITEKLGISDDVAGAT) are Cytoplasmic-facing. Residues 175–215 (VAGATFMAAGGSAPELFTSLIGVFIAHSNVGIGTIVGSAVF) form an Alpha-1 repeat. A helical transmembrane segment spans residues 180-200 (FMAAGGSAPELFTSLIGVFIA). Residues 201–205 (HSNVG) are Extracellular-facing. The chain crosses the membrane as a helical span at residues 206–226 (IGTIVGSAVFNILFVIGMCAL). The Cytoplasmic segment spans residues 227–237 (FSREILNLTWW). The chain crosses the membrane as a helical span at residues 238–258 (PLFRDVSFYIVDLLMLITFFL). Residues 259-260 (DN) are Extracellular-facing. A helical membrane pass occupies residues 261-281 (VIMWWESLLLLTAYFAYVVFM). The Cytoplasmic portion of the chain corresponds to 282 to 502 (KFNVQVERWV…PDVRKPASRK (221 aa)). The interval 311 to 336 (KSPTAGDKDGPTLPSKPRLQRGGSSA) is disordered. A phosphoserine mark is found at Ser337 and Ser341. The tract at residues 397–467 (VDENERQNGA…EEDDQPLSLS (71 aa)) is disordered. Positions 416–442 (PNSTSTEVEMTPSSEASEPVQNGNLSH) are enriched in polar residues. Residues 503 to 523 (FFPITFFGSITWIAVFSYLMV) traverse the membrane as a helical segment. The Extracellular segment spans residues 524-538 (WWAHQVGETIGISEE). The chain crosses the membrane as a helical span at residues 539–559 (IMGLTILAAGTSIPDLITSVI). The stretch at 546–577 (AAGTSIPDLITSVIVARKGLGDMAVSSSVGSN) is one Alpha-2 repeat. At 560–574 (VARKGLGDMAVSSSV) the chain is on the cytoplasmic side. Residues 575–595 (GSNIFDITVGLPLPWLLYTII) form a helical membrane-spanning segment. Residues 596-607 (HRFSPVTVSSNG) are Extracellular-facing. A helical membrane pass occupies residues 608–628 (LFCAIVLLFIMLLFVILSIAL). The Cytoplasmic segment spans residues 629–635 (CKWRMNK). Residues 636–656 (ILGFIMFGLYFVFLVVSVLLE) form a helical membrane-spanning segment. Residues 657–666 (DKVLVCPVSI) lie on the Extracellular side of the membrane.

Belongs to the Ca(2+):cation antiporter (CaCA) (TC 2.A.19) family. SLC24A subfamily.

It localises to the cell membrane. The catalysed reaction is Ca(2+)(out) + K(+)(out) + 4 Na(+)(in) = Ca(2+)(in) + K(+)(in) + 4 Na(+)(out). Its function is as follows. Calcium, potassium:sodium antiporter that transports 1 Ca(2+) and 1 K(+) in exchange for 4 Na(+). Required for learming and memory by regulating neuronal Ca(2+), which is essential for the development of synaptic plasticity. This Mus musculus (Mouse) protein is Sodium/potassium/calcium exchanger 2.